Consider the following 440-residue polypeptide: Thymidine phosphorylase (440 aa).

It belongs to the thymidine/pyrimidine-nucleoside phosphorylase family. Homodimer.

It catalyses the reaction thymidine + phosphate = 2-deoxy-alpha-D-ribose 1-phosphate + thymine. The protein operates within pyrimidine metabolism; dTMP biosynthesis via salvage pathway; dTMP from thymine: step 1/2. The enzymes which catalyze the reversible phosphorolysis of pyrimidine nucleosides are involved in the degradation of these compounds and in their utilization as carbon and energy sources, or in the rescue of pyrimidine bases for nucleotide synthesis. This is Thymidine phosphorylase from Escherichia coli (strain 55989 / EAEC).